Consider the following 272-residue polypeptide: Exosome complex component MTR3 (272 aa).

The segment at 1–36 (MPGDHRRIRGPEESQPPQLYAADEEEAPGTRDPTRL) is disordered.

Belongs to the RNase PH family. In terms of assembly, component of the RNA exosome core complex (Exo-9), composed of EXOSC1, EXOSC2, EXOSC3, EXOSC4, EXOSC5, EXOSC6, EXOSC7, EXOSC8 and EXOSC9; within the complex interacts with EXOSC1, EXOSC7 and EXOSC8. The catalytically inactive Exo-9 may associate with the catalytic subunit EXOSC10/RRP6. Exo-9 may associate with DIS3 to form the nucleolar exosome complex, or DIS3L to form the cytoplasmic exosome complex. Exo-9 is formed by a hexameric base ring consisting of the heterodimers EXOSC4-EXOSC9, EXOSC5-EXOSC8 and EXOSC6-EXOSC7, and a cap ring consisting of EXOSC1, EXOSC2 and EXOSC3. The RNA exosome complex associates with cofactors EXOSC10/RRP6, C1D/RRP47, MPHOSPH6/MPP6 and MTREX/MTR4.

The protein localises to the cytoplasm. The protein resides in the nucleus. It localises to the nucleolus. In terms of biological role, non-catalytic component of the RNA exosome complex which has 3'-&gt;5' exoribonuclease activity and participates in a multitude of cellular RNA processing and degradation events. In the nucleus, the RNA exosome complex is involved in proper maturation of stable RNA species such as rRNA, snRNA and snoRNA, in the elimination of RNA processing by-products and non-coding 'pervasive' transcripts, such as antisense RNA species and promoter-upstream transcripts (PROMPTs), and of mRNAs with processing defects, thereby limiting or excluding their export to the cytoplasm. The RNA exosome may be involved in Ig class switch recombination (CSR) and/or Ig variable region somatic hypermutation (SHM) by targeting AICDA deamination activity to transcribed dsDNA substrates. In the cytoplasm, the RNA exosome complex is involved in general mRNA turnover and specifically degrades inherently unstable mRNAs containing AU-rich elements (AREs) within their 3' untranslated regions, and in RNA surveillance pathways, preventing translation of aberrant mRNAs. It seems to be involved in degradation of histone mRNA. The catalytic inactive RNA exosome core complex of 9 subunits (Exo-9) is proposed to play a pivotal role in the binding and presentation of RNA for ribonucleolysis, and to serve as a scaffold for the association with catalytic subunits and accessory proteins or complexes. The sequence is that of Exosome complex component MTR3 (EXOSC6) from Homo sapiens (Human).